The chain runs to 304 residues: UDP-3-O-acyl-N-acetylglucosamine deacetylase (304 aa).

His-78, His-237, and Asp-241 together coordinate Zn(2+). His-264 functions as the Proton donor in the catalytic mechanism.

The protein belongs to the LpxC family. Requires Zn(2+) as cofactor.

The enzyme catalyses a UDP-3-O-[(3R)-3-hydroxyacyl]-N-acetyl-alpha-D-glucosamine + H2O = a UDP-3-O-[(3R)-3-hydroxyacyl]-alpha-D-glucosamine + acetate. It participates in glycolipid biosynthesis; lipid IV(A) biosynthesis; lipid IV(A) from (3R)-3-hydroxytetradecanoyl-[acyl-carrier-protein] and UDP-N-acetyl-alpha-D-glucosamine: step 2/6. Catalyzes the hydrolysis of UDP-3-O-myristoyl-N-acetylglucosamine to form UDP-3-O-myristoylglucosamine and acetate, the committed step in lipid A biosynthesis. This Polynucleobacter necessarius subsp. necessarius (strain STIR1) protein is UDP-3-O-acyl-N-acetylglucosamine deacetylase.